Here is a 426-residue protein sequence, read N- to C-terminus: Serine--tRNA ligase (426 aa).

Residue 231–233 participates in L-serine binding; that stretch reads TAE. 262-264 is a binding site for ATP; that stretch reads RAE. Residue Glu285 participates in L-serine binding. An ATP-binding site is contributed by 349 to 352; it reads EISS. Residue Ser385 coordinates L-serine.

Belongs to the class-II aminoacyl-tRNA synthetase family. Type-1 seryl-tRNA synthetase subfamily. Homodimer. The tRNA molecule binds across the dimer.

The protein resides in the cytoplasm. It catalyses the reaction tRNA(Ser) + L-serine + ATP = L-seryl-tRNA(Ser) + AMP + diphosphate + H(+). The enzyme catalyses tRNA(Sec) + L-serine + ATP = L-seryl-tRNA(Sec) + AMP + diphosphate + H(+). Its pathway is aminoacyl-tRNA biosynthesis; selenocysteinyl-tRNA(Sec) biosynthesis; L-seryl-tRNA(Sec) from L-serine and tRNA(Sec): step 1/1. Functionally, catalyzes the attachment of serine to tRNA(Ser). Is also able to aminoacylate tRNA(Sec) with serine, to form the misacylated tRNA L-seryl-tRNA(Sec), which will be further converted into selenocysteinyl-tRNA(Sec). This Myxococcus xanthus (strain DK1622) protein is Serine--tRNA ligase.